Consider the following 169-residue polypeptide: GTP-dependent dephospho-CoA kinase (169 aa).

GTP is bound by residues Asp-45, Asp-64, Lys-66, and Glu-121.

The protein belongs to the GTP-dependent DPCK family.

It catalyses the reaction 3'-dephospho-CoA + GTP = GDP + CoA + H(+). It functions in the pathway cofactor biosynthesis; coenzyme A biosynthesis. Catalyzes the GTP-dependent phosphorylation of the 3'-hydroxyl group of dephosphocoenzyme A to form coenzyme A (CoA). This Methanosphaera stadtmanae (strain ATCC 43021 / DSM 3091 / JCM 11832 / MCB-3) protein is GTP-dependent dephospho-CoA kinase.